We begin with the raw amino-acid sequence, 551 residues long: Nicotianamine aminotransferase B (551 aa).

The tract at residues Lys24 to Glu127 is disordered. The segment covering Gly86 to Ala96 has biased composition (basic and acidic residues). Positions Ala111–Ala123 are enriched in low complexity. An N6-(pyridoxal phosphate)lysine modification is found at Lys379.

It belongs to the class-I pyridoxal-phosphate-dependent aminotransferase family. Pyridoxal 5'-phosphate is required as a cofactor. In terms of tissue distribution, expressed in roots, but not in leaves.

The enzyme catalyses nicotianamine + 2-oxoglutarate = 3''-deamino-3''-oxonicotianamine + L-glutamate. Functionally, involved in biosynthesis of mugineic acid family phytosiderophores. The sequence is that of Nicotianamine aminotransferase B from Hordeum vulgare (Barley).